The sequence spans 129 residues: NADPH-dependent 7-cyano-7-deazaguanine reductase (129 aa).

The active-site Thioimide intermediate is the C34. The active-site Proton donor is the D41. Substrate contacts are provided by residues 56–58 (VEL) and 75–76 (HE).

This sequence belongs to the GTP cyclohydrolase I family. QueF type 1 subfamily.

The protein localises to the cytoplasm. It catalyses the reaction 7-aminomethyl-7-carbaguanine + 2 NADP(+) = 7-cyano-7-deazaguanine + 2 NADPH + 3 H(+). The protein operates within tRNA modification; tRNA-queuosine biosynthesis. Catalyzes the NADPH-dependent reduction of 7-cyano-7-deazaguanine (preQ0) to 7-aminomethyl-7-deazaguanine (preQ1). The protein is NADPH-dependent 7-cyano-7-deazaguanine reductase of Thioalkalivibrio sulfidiphilus (strain HL-EbGR7).